Here is a 576-residue protein sequence, read N- to C-terminus: Sulfite reductase [NADPH] hemoprotein beta-component (576 aa).

4 residues coordinate [4Fe-4S] cluster: Cys-435, Cys-441, Cys-480, and Cys-484. Cys-484 contacts siroheme.

This sequence belongs to the nitrite and sulfite reductase 4Fe-4S domain family. Alpha(8)-beta(8). The alpha component is a flavoprotein, the beta component is a hemoprotein. It depends on siroheme as a cofactor. [4Fe-4S] cluster is required as a cofactor.

It carries out the reaction hydrogen sulfide + 3 NADP(+) + 3 H2O = sulfite + 3 NADPH + 4 H(+). Its pathway is sulfur metabolism; hydrogen sulfide biosynthesis; hydrogen sulfide from sulfite (NADPH route): step 1/1. Component of the sulfite reductase complex that catalyzes the 6-electron reduction of sulfite to sulfide. This is one of several activities required for the biosynthesis of L-cysteine from sulfate. The chain is Sulfite reductase [NADPH] hemoprotein beta-component from Yersinia pseudotuberculosis serotype O:1b (strain IP 31758).